Here is a 371-residue protein sequence, read N- to C-terminus: Probable dual-specificity RNA methyltransferase RlmN (371 aa).

Glutamate 113 acts as the Proton acceptor in catalysis. The Radical SAM core domain occupies 119–352; the sequence is QSWGNSVCVT…TTVRREMGGE (234 aa). A disulfide bridge connects residues cysteine 126 and cysteine 357. [4Fe-4S] cluster is bound by residues cysteine 133, cysteine 137, and cysteine 140. S-adenosyl-L-methionine is bound by residues 182–183, serine 214, 237–239, and asparagine 313; these read GE and SLH. Cysteine 357 acts as the S-methylcysteine intermediate in catalysis.

This sequence belongs to the radical SAM superfamily. RlmN family. [4Fe-4S] cluster is required as a cofactor.

It is found in the cytoplasm. It catalyses the reaction adenosine(2503) in 23S rRNA + 2 reduced [2Fe-2S]-[ferredoxin] + 2 S-adenosyl-L-methionine = 2-methyladenosine(2503) in 23S rRNA + 5'-deoxyadenosine + L-methionine + 2 oxidized [2Fe-2S]-[ferredoxin] + S-adenosyl-L-homocysteine. It carries out the reaction adenosine(37) in tRNA + 2 reduced [2Fe-2S]-[ferredoxin] + 2 S-adenosyl-L-methionine = 2-methyladenosine(37) in tRNA + 5'-deoxyadenosine + L-methionine + 2 oxidized [2Fe-2S]-[ferredoxin] + S-adenosyl-L-homocysteine. Its function is as follows. Specifically methylates position 2 of adenine 2503 in 23S rRNA and position 2 of adenine 37 in tRNAs. This Symbiobacterium thermophilum (strain DSM 24528 / JCM 14929 / IAM 14863 / T) protein is Probable dual-specificity RNA methyltransferase RlmN.